We begin with the raw amino-acid sequence, 469 residues long: Septin homolog spn1 (469 aa).

The tract at residues 1 to 58 is disordered; that stretch reads MASMVLADGMPTVKDDSTRSRGSDVDSFTSTDNVTQINVEAAISENKNEEKPIQDNSE. The segment covering 13 to 24 has biased composition (basic and acidic residues); it reads VKDDSTRSRGSD. Polar residues predominate over residues 26–38; the sequence is DSFTSTDNVTQIN. Residues 92 to 367 form the Septin-type G domain; that stretch reads QGFNFNVLVL…EAYRTERLLS (276 aa). The G1 motif stretch occupies residues 102 to 109; that stretch reads GESGSGKS. GTP is bound by residues 102–109, T139, G165, 244–252, and R317; these read GESGSGKS and KADTLTDDE. A G3 motif region spans residues 162-165; sequence DTPG. Positions 243–246 are G4 motif; it reads AKAD. The stretch at 383 to 469 forms a coiled coil; sequence SAKLEEERAL…NEKSKRKFFK (87 aa).

This sequence belongs to the TRAFAC class TrmE-Era-EngA-EngB-Septin-like GTPase superfamily. Septin GTPase family. Component of the septin complex composed of two copies of each spn1, spn2, spn3 and spn4.

Its subcellular location is the cytoplasm. The protein resides in the cell cortex. Plays a role in the cell cycle. Involved in a late stage of septum formation leading to the separation of the daughter cells. In Schizosaccharomyces pombe (strain 972 / ATCC 24843) (Fission yeast), this protein is Septin homolog spn1 (spn1).